Here is a 115-residue protein sequence, read N- to C-terminus: Histidine-rich carboxyl terminus protein 1 (115 aa).

A helical transmembrane segment spans residues 9–29 (ALVGWITGAAVAVLLLLLLLA). Residues 86 to 115 (GLHHHHHPRHTPHHLHHHHHPHRHHPRHAR) form a disordered region. The span at 87–115 (LHHHHHPRHTPHHLHHHHHPHRHHPRHAR) shows a compositional bias: basic residues.

Its subcellular location is the membrane. This is Histidine-rich carboxyl terminus protein 1 (HRCT1) from Homo sapiens (Human).